A 111-amino-acid polypeptide reads, in one-letter code: Cornifelin homolog B (111 aa).

It belongs to the cornifelin family.

The protein is Cornifelin homolog B (cnfn-b) of Xenopus laevis (African clawed frog).